The sequence spans 552 residues: CTP synthase (552 aa).

The amidoligase domain stretch occupies residues 1–270; that stretch reads MTKYVFVTGG…DRIICEELKL (270 aa). A CTP-binding site is contributed by serine 13. Position 13 (serine 13) interacts with UTP. Residues 14–19 and aspartate 71 each bind ATP; that span reads SLGKGI. Aspartate 71 and glutamate 144 together coordinate Mg(2+). CTP-binding positions include 151–153, 191–196, and lysine 227; these read DIE and KTKPTQ. Residues 191 to 196 and lysine 227 contribute to the UTP site; that span reads KTKPTQ. Residues 295–547 enclose the Glutamine amidotransferase type-1 domain; it reads TIGMVGKYVD…VEAALANKQA (253 aa). Residue glycine 356 participates in L-glutamine binding. Cysteine 383 serves as the catalytic Nucleophile; for glutamine hydrolysis. Residues 384–387, glutamate 407, and arginine 473 each bind L-glutamine; that span reads LGMQ. Catalysis depends on residues histidine 520 and glutamate 522.

It belongs to the CTP synthase family. Homotetramer.

The catalysed reaction is UTP + L-glutamine + ATP + H2O = CTP + L-glutamate + ADP + phosphate + 2 H(+). It catalyses the reaction L-glutamine + H2O = L-glutamate + NH4(+). It carries out the reaction UTP + NH4(+) + ATP = CTP + ADP + phosphate + 2 H(+). The protein operates within pyrimidine metabolism; CTP biosynthesis via de novo pathway; CTP from UDP: step 2/2. Its activity is regulated as follows. Allosterically activated by GTP, when glutamine is the substrate; GTP has no effect on the reaction when ammonia is the substrate. The allosteric effector GTP functions by stabilizing the protein conformation that binds the tetrahedral intermediate(s) formed during glutamine hydrolysis. Inhibited by the product CTP, via allosteric rather than competitive inhibition. Functionally, catalyzes the ATP-dependent amination of UTP to CTP with either L-glutamine or ammonia as the source of nitrogen. Regulates intracellular CTP levels through interactions with the four ribonucleotide triphosphates. The chain is CTP synthase from Burkholderia cenocepacia (strain HI2424).